Reading from the N-terminus, the 367-residue chain is MVAVLTWALALLSAFATVQTQKGFWDYFSQSSGDKSKVARVQQQKLTWEPTSLKDSLEQDLSNMDKFLEKLGPLSGQGREPPGLPHDPEGMRQQLQEELAEVRARLEPYMAEAHQQVGWNLEGLRRQLKPYTVELMEQVARRVQELQEQLRVVGEGTKAQLLGGVDEARGLLQELQTRVVQHTGRVRELFHPYAQRLVTGIGRHVQELHRSVAPHAAASSARLSRCVQTLSRKLTLKAEALHARIQQNLGQLREELSAFASAGAGGAEEGANPDAQMLSQEVRQRLQAFRHDTFLQIADFTRAIDQETEEVQLQLAPPPPGHSAFAPEFLQADSSEARSKLQARLEDLWEDINDSLHDRGLSHLEEP.

The first 20 residues, 1-20, serve as a signal peptide directing secretion; it reads MVAVLTWALALLSAFATVQT. Serine 56 carries the post-translational modification Phosphoserine. The disordered stretch occupies residues 71 to 90; the sequence is LGPLSGQGREPPGLPHDPEG.

Belongs to the apolipoprotein A1/A4/E family. In terms of assembly, interacts with GPIHBP1. Interacts with SORL1; this interaction leads to APOA5 internalization and sorting either to lysosomes and degradation, or to the trans-Golgi network. Post-translationally, phosphorylated by FAM20C in the extracellular medium.

The protein resides in the secreted. Its subcellular location is the early endosome. It localises to the late endosome. It is found in the golgi apparatus. The protein localises to the trans-Golgi network. In terms of biological role, minor apolipoprotein mainly associated with HDL and to a lesser extent with VLDL. May also be associated with chylomicrons. Important determinant of plasma triglyceride (TG) levels by both being a potent stimulator of apo-CII lipoprotein lipase (LPL) TG hydrolysis and an inhibitor of the hepatic VLDL-TG production rate (without affecting the VLDL-apoB production rate). Activates poorly lecithin:cholesterol acyltransferase (LCAT) and does not enhance efflux of cholesterol from macrophages. Binds heparin. This Neomonachus schauinslandi (Hawaiian monk seal) protein is Apolipoprotein A-V (APOA5).